We begin with the raw amino-acid sequence, 320 residues long: 3'-5' exoribonuclease YhaM (320 aa).

Residues 18–90 (FLIKSATKAV…QLKIGSIRPT (73 aa)) constitute a DNA-binding region (OB). The region spanning 163 to 279 (HVVCMLNVAK…LHMIDNIDAK (117 aa)) is the HD domain.

Belongs to the YhaM family.

Functionally, shows a 3'-5' exoribonuclease activity. This chain is 3'-5' exoribonuclease YhaM, found in Halalkalibacterium halodurans (strain ATCC BAA-125 / DSM 18197 / FERM 7344 / JCM 9153 / C-125) (Bacillus halodurans).